Here is a 544-residue protein sequence, read N- to C-terminus: Chaperonin GroEL 1 (544 aa).

ATP-binding positions include threonine 29 to proline 32, aspartate 86 to threonine 90, glycine 413, asparagine 479 to alanine 481, and aspartate 495.

It belongs to the chaperonin (HSP60) family. In terms of assembly, forms a cylinder of 14 subunits composed of two heptameric rings stacked back-to-back. Interacts with the co-chaperonin GroES.

The protein localises to the cytoplasm. It catalyses the reaction ATP + H2O + a folded polypeptide = ADP + phosphate + an unfolded polypeptide.. Together with its co-chaperonin GroES, plays an essential role in assisting protein folding. The GroEL-GroES system forms a nano-cage that allows encapsulation of the non-native substrate proteins and provides a physical environment optimized to promote and accelerate protein folding. The protein is Chaperonin GroEL 1 of Parasynechococcus marenigrum (strain WH8102).